The following is a 105-amino-acid chain: NADH-quinone oxidoreductase subunit K (105 aa).

The next 3 membrane-spanning stretches (helical) occupy residues 9–29 (PNYYLVLAAVLFTIGAAGVLV), 34–54 (IVLFMCVELMLNAANLTLVTF), and 65–85 (IMAFFVMVVAAAEVVVGLAII).

This sequence belongs to the complex I subunit 4L family. NDH-1 is composed of 14 different subunits. Subunits NuoA, H, J, K, L, M, N constitute the membrane sector of the complex.

The protein localises to the cell membrane. It carries out the reaction a quinone + NADH + 5 H(+)(in) = a quinol + NAD(+) + 4 H(+)(out). Its function is as follows. NDH-1 shuttles electrons from NADH, via FMN and iron-sulfur (Fe-S) centers, to quinones in the respiratory chain. The immediate electron acceptor for the enzyme in this species is believed to be a menaquinone. Couples the redox reaction to proton translocation (for every two electrons transferred, four hydrogen ions are translocated across the cytoplasmic membrane), and thus conserves the redox energy in a proton gradient. The sequence is that of NADH-quinone oxidoreductase subunit K from Salinispora tropica (strain ATCC BAA-916 / DSM 44818 / JCM 13857 / NBRC 105044 / CNB-440).